The following is a 210-amino-acid chain: Chloramphenicol acetyltransferase (210 aa).

The active site involves His79.

It belongs to the transferase hexapeptide repeat family.

It catalyses the reaction chloramphenicol + acetyl-CoA = chloramphenicol 3-acetate + CoA. In terms of biological role, this enzyme is an effector of chloramphenicol resistance in bacteria. The chain is Chloramphenicol acetyltransferase (catB4) from Klebsiella aerogenes (Enterobacter aerogenes).